Here is a 106-residue protein sequence, read N- to C-terminus: Large ribosomal subunit protein bL21 (106 aa).

The protein belongs to the bacterial ribosomal protein bL21 family. As to quaternary structure, part of the 50S ribosomal subunit. Contacts protein L20.

In terms of biological role, this protein binds to 23S rRNA in the presence of protein L20. In Syntrophobacter fumaroxidans (strain DSM 10017 / MPOB), this protein is Large ribosomal subunit protein bL21.